A 542-amino-acid chain; its full sequence is Sialate O-acetylesterase (542 aa).

The signal sequence occupies residues methionine 1–glycine 23. N-linked (GlcNAc...) asparagine glycans are attached at residues asparagine 107, asparagine 138, asparagine 188, asparagine 294, asparagine 357, asparagine 428, asparagine 449, and asparagine 463.

As to quaternary structure, disulfide-linked heterodimer of a small subunit and a large subunit. In terms of processing, the two subunits are derived from a single precursor by proteolytic cleavage. Glycosylated. Widely expressed.

It is found in the lysosome. It carries out the reaction N-acetyl-9-O-acetylneuraminate + H2O = N-acetylneuraminate + acetate + H(+). It catalyses the reaction an Ac-O-9-sialoglycoconjugate + H2O = a sialoglycoconjugate + acetate + H(+). Its activity is regulated as follows. Inhibited by diisopropyl fluorophosphate and diethyl-P-nitrophenyl phosphate. In terms of biological role, catalyzes the removal of O-acetyl ester groups from position 9 of the free diacetylated sialate N-acetyl-9-O-acetylneuraminate (Neu5,9Ac2) in the cytosol and of the diacetylated sialate residues of sialylglycoconjugates in the lysosomes. Together with the sialate-O-acetyltransferase they regulate the balance of acetylated sialoglycoconjugates, key players in various processes such as cell-cell interactions, host-pathogen recognition, and tumor antigenicity. The protein is Sialate O-acetylesterase (Siae) of Rattus norvegicus (Rat).